We begin with the raw amino-acid sequence, 102 residues long: Citrate lyase acyl carrier protein (102 aa).

Ser-14 carries the post-translational modification O-(phosphoribosyl dephospho-coenzyme A)serine.

It belongs to the CitD family. As to quaternary structure, oligomer with a subunit composition of (alpha,beta,gamma)6.

It localises to the cytoplasm. Functionally, covalent carrier of the coenzyme of citrate lyase. The sequence is that of Citrate lyase acyl carrier protein from Serratia proteamaculans (strain 568).